The primary structure comprises 305 residues: uncharacterized protein (305 aa).

This is an uncharacterized protein from Streptomyces griseus.